The chain runs to 78 residues: MHEQLSPRDQALEARLVELETRLSFQEQALNELSEALADARLTGARNAELIRHLLDDLGKVRSTLFADAADEPPPPHY.

It belongs to the SlyX family.

This Xanthomonas oryzae pv. oryzae (strain MAFF 311018) protein is Protein SlyX homolog.